A 245-amino-acid chain; its full sequence is 2,3,4,5-tetrahydropyridine-2,6-dicarboxylate N-acetyltransferase (245 aa).

This sequence belongs to the transferase hexapeptide repeat family. DapH subfamily.

The enzyme catalyses (S)-2,3,4,5-tetrahydrodipicolinate + acetyl-CoA + H2O = L-2-acetamido-6-oxoheptanedioate + CoA. It participates in amino-acid biosynthesis; L-lysine biosynthesis via DAP pathway; LL-2,6-diaminopimelate from (S)-tetrahydrodipicolinate (acetylase route): step 1/3. In terms of biological role, catalyzes the transfer of an acetyl group from acetyl-CoA to tetrahydrodipicolinate. The protein is 2,3,4,5-tetrahydropyridine-2,6-dicarboxylate N-acetyltransferase of Methanopyrus kandleri (strain AV19 / DSM 6324 / JCM 9639 / NBRC 100938).